Consider the following 353-residue polypeptide: N-methyltransferase (353 aa).

Residues Ser171, Ala195, Asp218, Asp238, and Lys252 each contribute to the S-adenosyl-L-homocysteine site. Asp218 contacts S-adenosyl-L-methionine.

Belongs to the class I-like SAM-binding methyltransferase superfamily. Cation-independent O-methyltransferase family. As to quaternary structure, homodimer. Expressed at high levels in all tissues.

It carries out the reaction 3-methoxytyramine + S-adenosyl-L-methionine = N-methyl-3-methoxytyramine + S-adenosyl-L-homocysteine + H(+). The catalysed reaction is mescaline + S-adenosyl-L-methionine = N-methylmescaline + S-adenosyl-L-homocysteine + H(+). The enzyme catalyses tyramine + S-adenosyl-L-methionine = N-methyltyramine + S-adenosyl-L-homocysteine + H(+). It catalyses the reaction 4-hydroxy-3,5-dimethoxyphenethylamine + S-adenosyl-L-methionine = N-methyl-4-hydroxy-3,5-dimethoxyphenethylamine + S-adenosyl-L-homocysteine + H(+). Its pathway is aromatic compound metabolism. The protein operates within alkaloid biosynthesis. N-methyltransferase participating in the biosynthesis of natural products derived from phenylethylamine, including mescaline, a natural hallucinogen potentially used in psychotherapeutic treatments. Catalyzes the N-methylation of many substrates, including 3-methoxytyramine, 5-hydroxy-3,4-dimethoxyphenethylamine, 4-hydroxy-3,5-dimethoxyphenethylamine, tyramine and mescaline. In Lophophora williamsii (Peyote), this protein is N-methyltransferase.